The following is a 140-amino-acid chain: Nucleoside diphosphate kinase (140 aa).

ATP contacts are provided by Lys11, Phe59, Arg87, Thr93, Arg104, and Asn114. His117 (pros-phosphohistidine intermediate) is an active-site residue.

Belongs to the NDK family. Homotetramer. The cofactor is Mg(2+).

It is found in the cytoplasm. The enzyme catalyses a 2'-deoxyribonucleoside 5'-diphosphate + ATP = a 2'-deoxyribonucleoside 5'-triphosphate + ADP. It catalyses the reaction a ribonucleoside 5'-diphosphate + ATP = a ribonucleoside 5'-triphosphate + ADP. Functionally, major role in the synthesis of nucleoside triphosphates other than ATP. The ATP gamma phosphate is transferred to the NDP beta phosphate via a ping-pong mechanism, using a phosphorylated active-site intermediate. The chain is Nucleoside diphosphate kinase from Rhodopseudomonas palustris (strain BisB5).